The sequence spans 324 residues: Acetyl-coenzyme A carboxylase carboxyl transferase subunit beta (324 aa).

The span at 1–16 shows a compositional bias: low complexity; that stretch reads MTKNNNDLSNSSSNPP. The segment at 1 to 51 is disordered; sequence MTKNNNDLSNSSSNPPSNRPVAGKEAELEIQRETHAAQSGQSESWLSRPIP. Positions 22-35 are enriched in basic and acidic residues; it reads AGKEAELEIQRETH. Polar residues predominate over residues 36–45; the sequence is AAQSGQSESW. Positions 68–324 constitute a CoA carboxyltransferase N-terminal domain; the sequence is PSTECPQCHS…YRLLAKLTHV (257 aa). Zn(2+)-binding residues include C72, C75, C91, and C94. The C4-type zinc finger occupies 72 to 94; it reads CPQCHSMITNTALIFNAYVCPHC.

Belongs to the AccD/PCCB family. In terms of assembly, acetyl-CoA carboxylase is a heterohexamer composed of biotin carboxyl carrier protein (AccB), biotin carboxylase (AccC) and two subunits each of ACCase subunit alpha (AccA) and ACCase subunit beta (AccD). Requires Zn(2+) as cofactor.

The protein localises to the cytoplasm. It carries out the reaction N(6)-carboxybiotinyl-L-lysyl-[protein] + acetyl-CoA = N(6)-biotinyl-L-lysyl-[protein] + malonyl-CoA. The protein operates within lipid metabolism; malonyl-CoA biosynthesis; malonyl-CoA from acetyl-CoA: step 1/1. In terms of biological role, component of the acetyl coenzyme A carboxylase (ACC) complex. Biotin carboxylase (BC) catalyzes the carboxylation of biotin on its carrier protein (BCCP) and then the CO(2) group is transferred by the transcarboxylase to acetyl-CoA to form malonyl-CoA. This is Acetyl-coenzyme A carboxylase carboxyl transferase subunit beta from Psychrobacter sp. (strain PRwf-1).